Consider the following 287-residue polypeptide: 4-hydroxybenzoate octaprenyltransferase (287 aa).

Helical transmembrane passes span 20–40, 43–63, 94–114, 115–135, 137–157, 159–179, 210–230, 235–255, and 266–286; these read IGSLLLLWPTLWALFLAADGL, MHVLVVFVLGVVFMRAAGCVI, LGLFGLLVLVSFVLVLTMNTL, TIMLSVVGLVLAAAYPFMKRY, HLPQLVLGMAFGWSIPMAYAA, AGELPVVAWLLFTANILWTIA, IIIGVLQLSTLVTMILIGHSL, IYYWFLLMASGLFVYQQRLIG, and FLNNNYVGMLIFLGIAISVMM.

It belongs to the UbiA prenyltransferase family. It depends on Mg(2+) as a cofactor.

The protein resides in the cell inner membrane. It carries out the reaction all-trans-octaprenyl diphosphate + 4-hydroxybenzoate = 4-hydroxy-3-(all-trans-octaprenyl)benzoate + diphosphate. The protein operates within cofactor biosynthesis; ubiquinone biosynthesis. Catalyzes the prenylation of para-hydroxybenzoate (PHB) with an all-trans polyprenyl group. Mediates the second step in the final reaction sequence of ubiquinone-8 (UQ-8) biosynthesis, which is the condensation of the polyisoprenoid side chain with PHB, generating the first membrane-bound Q intermediate 3-octaprenyl-4-hydroxybenzoate. This chain is 4-hydroxybenzoate octaprenyltransferase, found in Photobacterium profundum (strain SS9).